The following is a 282-amino-acid chain: ATP phosphoribosyltransferase (282 aa).

It belongs to the ATP phosphoribosyltransferase family. Long subfamily. It depends on Mg(2+) as a cofactor.

The protein localises to the cytoplasm. The catalysed reaction is 1-(5-phospho-beta-D-ribosyl)-ATP + diphosphate = 5-phospho-alpha-D-ribose 1-diphosphate + ATP. It functions in the pathway amino-acid biosynthesis; L-histidine biosynthesis; L-histidine from 5-phospho-alpha-D-ribose 1-diphosphate: step 1/9. Feedback inhibited by histidine. Functionally, catalyzes the condensation of ATP and 5-phosphoribose 1-diphosphate to form N'-(5'-phosphoribosyl)-ATP (PR-ATP). Has a crucial role in the pathway because the rate of histidine biosynthesis seems to be controlled primarily by regulation of HisG enzymatic activity. In Pyrobaculum islandicum (strain DSM 4184 / JCM 9189 / GEO3), this protein is ATP phosphoribosyltransferase.